The chain runs to 409 residues: Phosphatidylserine decarboxylase proenzyme, mitochondrial (409 aa).

A mitochondrion-targeting transit peptide spans 1-52; sequence MAASVCRPYVRSLPGVMPWRSSSCHYEYTAMHHFLGSFQKLPFEPFNTGARK. Residues 53-63 lie on the Mitochondrial matrix side of the membrane; sequence IHTAPVRSLFL. A helical transmembrane segment spans residues 64–82; that stretch reads LRPVPILLATGGGYAGYRQ. Over 83 to 409 the chain is Mitochondrial intermembrane; the sequence is YEKYRDQKLE…IRFGEALGSL (327 aa). Active-site charge relay system; for autoendoproteolytic cleavage activity residues include Asp-191, His-267, and Ser-378. Ser-378 (schiff-base intermediate with substrate; via pyruvic acid; for decarboxylase activity) is an active-site residue. Position 378 is a pyruvic acid (Ser); by autocatalysis (Ser-378).

This sequence belongs to the phosphatidylserine decarboxylase family. PSD-B subfamily. Eukaryotic type I sub-subfamily. Heterodimer of a large membrane-associated beta subunit and a small pyruvoyl-containing alpha subunit. The cofactor is pyruvate. Post-translationally, is synthesized initially as an inactive proenzyme. Formation of the active enzyme involves a self-maturation process in which the active site pyruvoyl group is generated from an internal serine residue via an autocatalytic post-translational modification. Two non-identical subunits are generated from the proenzyme in this reaction, and the pyruvate is formed at the N-terminus of the alpha chain, which is derived from the carboxyl end of the proenzyme. The autoendoproteolytic cleavage occurs by a canonical serine protease mechanism, in which the side chain hydroxyl group of the serine supplies its oxygen atom to form the C-terminus of the beta chain, while the remainder of the serine residue undergoes an oxidative deamination to produce ammonia and the pyruvoyl prosthetic group on the alpha chain. During this reaction, the Ser that is part of the protease active site of the proenzyme becomes the pyruvoyl prosthetic group, which constitutes an essential element of the active site of the mature decarboxylase.

It localises to the mitochondrion inner membrane. It is found in the cytoplasm. Its subcellular location is the lipid droplet. It catalyses the reaction a 1,2-diacyl-sn-glycero-3-phospho-L-serine + H(+) = a 1,2-diacyl-sn-glycero-3-phosphoethanolamine + CO2. Its pathway is phospholipid metabolism; phosphatidylethanolamine biosynthesis. In terms of biological role, catalyzes the formation of phosphatidylethanolamine (PtdEtn) from phosphatidylserine (PtdSer). Plays a central role in phospholipid metabolism and in the interorganelle trafficking of phosphatidylserine. May be involved in lipid droplet biogenesis at the endoplasmic reticulum membrane. The polypeptide is Phosphatidylserine decarboxylase proenzyme, mitochondrial (Cricetulus griseus (Chinese hamster)).